A 327-amino-acid polypeptide reads, in one-letter code: Cyclic AMP-responsive element-binding protein 1 (327 aa).

Disordered stretches follow at residues 1 to 29 (MTMD…TVQA) and 94 to 113 (SEDS…RREI). Positions 8–146 (DNQQSGDAAV…IEEEKSEEET (139 aa)) constitute a KID domain. Residues 20-29 (AESQQMTVQA) show a composition bias toward polar residues. S119 is subject to Phosphoserine; by CaMK1, CaMK2, CaMK4, PKB/AKT1 or PKB/AKT2, RPS6KA3, RPS6KA4, RPS6KA5 and SGK1. A Glycyl lysine isopeptide (Lys-Gly) (interchain with G-Cter in SUMO2) cross-link involves residue K122. The interval 126 to 149 (DLSSDAPGVPRIEEEKSEEETSAP) is disordered. A Phosphoserine; by CaMK2 modification is found at S128. S257 carries the phosphoserine; by HIPK2 modification. The 59-residue stretch at 269 to 327 (ARKREVRLMKNREAARECRRKKKEYVKCLENRVAVLENQNKTLIEELKALKDLYCHKSD) folds into the bZIP domain. Positions 270–295 (RKREVRLMKNREAARECRRKKKEYVK) are basic motif. Glycyl lysine isopeptide (Lys-Gly) (interchain with G-Cter in SUMO1) cross-links involve residues K271 and K290. Residues 297 to 318 (LENRVAVLENQNKTLIEELKAL) are leucine-zipper.

Belongs to the bZIP family. As to quaternary structure, interacts with PPRC1. Binds DNA as a dimer. This dimer is stabilized by magnesium ions. Interacts, through the bZIP domain, with the coactivators CRTC1/TORC1, CRTC2/TORC2 and CRTC3/TORC3. When phosphorylated on Ser-119, binds CREBBP. Interacts with CREBL2; regulates CREB1 phosphorylation, stability and transcriptional activity. Interacts (phosphorylated form) with TOX3. Interacts with ARRB1. Binds to HIPK2. Interacts with SGK1. Interacts with TSSK4; this interaction facilitates phosphorylation on Ser-119. Forms a complex with KMT2A and CREBBP. Interacts with TOX4; CREB1 is required for full induction of TOX4-dependent activity and the interaction is increased by cAMP and inhibited by insulin. Post-translationally, phosphorylation of Ser-119 allows CREBBP binding. Stimulated by phosphorylation. Phosphorylation of both Ser-128 and Ser-119 in the SCN regulates the activity of CREB and participate in circadian rhythm generation. Phosphorylated upon calcium influx by CaMK4 and CaMK2 on Ser-119. CaMK4 is much more potent than CaMK2 in activating CREB. Phosphorylated by CaMK2 on Ser-128. Phosphorylation of Ser-128 blocks CREB-mediated transcription even when Ser-119 is phosphorylated. Phosphorylated by CaMK1. Phosphorylation of Ser-257 by HIPK2 in response to genotoxic stress promotes CREB1 activity, facilitating the recruitment of the coactivator CBP. Phosphorylated at Ser-119 by RPS6KA3, RPS6KA4 and RPS6KA5 in response to mitogenic or stress stimuli. CREBL2 positively regulates phosphorylation at Ser-119 thereby stimulating CREB1 transcriptional activity. In liver, phosphorylation is induced by fasting or glucagon in a circadian fashion. Phosphorylated by TSSK4 on Ser-119. In terms of processing, sumoylated with SUMO1. Sumoylation on Lys-290, but not on Lys-271, is required for nuclear localization of this protein. Sumoylation is enhanced under hypoxia, promoting nuclear localization and stabilization.

It is found in the nucleus. Phosphorylation-dependent transcription factor that stimulates transcription upon binding to the DNA cAMP response element (CRE), a sequence present in many viral and cellular promoters. Transcription activation is enhanced by the TORC coactivators which act independently of Ser-119 phosphorylation. Involved in different cellular processes including the synchronization of circadian rhythmicity and the differentiation of adipose cells. Regulates the expression of apoptotic and inflammatory response factors in cardiomyocytes in response to ERFE-mediated activation of AKT signaling. This Rattus norvegicus (Rat) protein is Cyclic AMP-responsive element-binding protein 1 (Creb1).